A 252-amino-acid chain; its full sequence is Cell division protein ZapD (252 aa).

Belongs to the ZapD family. As to quaternary structure, interacts with FtsZ.

Its subcellular location is the cytoplasm. In terms of biological role, cell division factor that enhances FtsZ-ring assembly. Directly interacts with FtsZ and promotes bundling of FtsZ protofilaments, with a reduction in FtsZ GTPase activity. This is Cell division protein ZapD from Cupriavidus necator (strain ATCC 17699 / DSM 428 / KCTC 22496 / NCIMB 10442 / H16 / Stanier 337) (Ralstonia eutropha).